The chain runs to 107 residues: Cell cycle protein GpsB (107 aa).

Positions 32 to 65 (LDNVIQDYETYISEIEELKAEIERLKNQNTHPKS) form a coiled coil. Residues 57–80 (KNQNTHPKSPSTENRHAMVQPTRV) form a disordered region. The span at 58-68 (NQNTHPKSPST) shows a compositional bias: polar residues.

This sequence belongs to the GpsB family. Forms polymers through the coiled coil domains. Interacts with PBP1, MreC and EzrA.

Its subcellular location is the cytoplasm. Its function is as follows. Divisome component that associates with the complex late in its assembly, after the Z-ring is formed, and is dependent on DivIC and PBP2B for its recruitment to the divisome. Together with EzrA, is a key component of the system that regulates PBP1 localization during cell cycle progression. Its main role could be the removal of PBP1 from the cell pole after pole maturation is completed. Also contributes to the recruitment of PBP1 to the division complex. Not essential for septum formation. The sequence is that of Cell cycle protein GpsB from Streptococcus uberis (strain ATCC BAA-854 / 0140J).